A 141-amino-acid chain; its full sequence is Large ribosomal subunit protein uL16 (141 aa).

A compositionally biased stretch (basic residues) spans M1–N17. Residues M1–T22 form a disordered region.

Belongs to the universal ribosomal protein uL16 family. Part of the 50S ribosomal subunit.

Binds 23S rRNA and is also seen to make contacts with the A and possibly P site tRNAs. The protein is Large ribosomal subunit protein uL16 of Campylobacter curvus (strain 525.92).